The sequence spans 312 residues: Olfactory receptor 8H3 (312 aa).

The Extracellular segment spans residues 1–26 (MMGRRNDTNVADFILTGLSDSEEVQM). An N-linked (GlcNAc...) asparagine glycan is attached at Asn6. Residues 27-47 (ALFMLFLLIYLITMLGNVGML) traverse the membrane as a helical segment. Residues 48–55 (LIIRLDLQ) are Cytoplasmic-facing. A helical membrane pass occupies residues 56–76 (LHTPMYFFLTHLSFIDLSYST). The Extracellular segment spans residues 77–99 (VVTPKTLANLLTSNYISFTGCFA). Residues Cys97 and Cys189 are joined by a disulfide bond. Residues 100–120 (QMFCFVFLGTAECYLLSSMAY) form a helical membrane-spanning segment. Residues 121-139 (DRYAAICSPLHYTVIMPKR) are Cytoplasmic-facing. The helical transmembrane segment at 140–160 (LCLALITGPYVIGFMDSFVNV) threads the bilayer. Topologically, residues 161 to 197 (VSMSRLHFCDSNIIHHFFCDTSPILALSCTDTDNTEM) are extracellular. Residues 198–217 (LIFIIAGSTLMVSLITISAS) form a helical membrane-spanning segment. The Cytoplasmic portion of the chain corresponds to 218–237 (YVSILSTILKINSTSGKQKA). The chain crosses the membrane as a helical span at residues 238-258 (FSTCVSHLLGVTIFYGTMIFT). At 259-271 (YLKPRKSYSLGRD) the chain is on the extracellular side. A helical transmembrane segment spans residues 272–292 (QVAPVFYTIVIPMLNPLIYSL). Over 293–312 (RNREVKNALIRVMQRRQDSR) the chain is Cytoplasmic.

The protein belongs to the G-protein coupled receptor 1 family.

The protein localises to the cell membrane. In terms of biological role, odorant receptor. This Homo sapiens (Human) protein is Olfactory receptor 8H3 (OR8H3).